A 117-amino-acid polypeptide reads, in one-letter code: Ribonuclease P protein component (117 aa).

This sequence belongs to the RnpA family. In terms of assembly, consists of a catalytic RNA component (M1 or rnpB) and a protein subunit.

The catalysed reaction is Endonucleolytic cleavage of RNA, removing 5'-extranucleotides from tRNA precursor.. In terms of biological role, RNaseP catalyzes the removal of the 5'-leader sequence from pre-tRNA to produce the mature 5'-terminus. It can also cleave other RNA substrates such as 4.5S RNA. The protein component plays an auxiliary but essential role in vivo by binding to the 5'-leader sequence and broadening the substrate specificity of the ribozyme. The sequence is that of Ribonuclease P protein component from Staphylococcus aureus (strain MW2).